The sequence spans 714 residues: Rho-GTPase-activating protein RGD2 (714 aa).

The 440-residue stretch at 2–441 folds into the F-BAR domain; that stretch reads LSFCDYFWSE…LENDIDPTAD (440 aa). One can recognise a DEP domain in the interval 218-298; that stretch reads PKTDYKLPLI…WKNTAYMFAN (81 aa). One can recognise a Rho-GAP domain in the interval 475–704; the sequence is VDLETRCRLD…DLLTHKKQIF (230 aa).

As to quaternary structure, interacts with CDC42 and RHO5.

Acts in signal transduction. Activates CDC42 and RHO5. This chain is Rho-GTPase-activating protein RGD2 (RGD2), found in Saccharomyces cerevisiae (strain ATCC 204508 / S288c) (Baker's yeast).